Reading from the N-terminus, the 1679-residue chain is [F-actin]-monooxygenase mical2b (1679 aa).

The interval 2 to 494 (GETEEERTSQ…RHLFISGEQD (493 aa)) is monooxygenase domain. Residues C97, 97-125 (CGFRTAIELALLGAKVVVIEKRDTFSRNN), E116, R118, R123, N125, and D398 contribute to the FAD site. The region spanning 516-619 (EVRPGRLLLW…MVLYLSKFYE (104 aa)) is the Calponin-homology (CH) domain. The Nuclear localization signal motif lies at 658–679 (RKRIPKLDKKLEESDVNRKRKK). Disordered regions lie at residues 661-772 (IPKL…KAKW), 818-838 (SAYKSSERRPRSPLIPFTPTL), 874-907 (SSLFTGNPAQPQTDESSPAVSPSSPPQTIPESST), 1073-1163 (STRH…RSTA), 1194-1247 (KPED…DEIP), 1259-1283 (EYPKPSSSSPEPIVTSISSDPISFS), 1302-1342 (DLTN…PAPP), and 1473-1509 (RNKASAQQQQQQKSNSSSEDEQEPKLTHSGALQKKKE). Basic and acidic residues-rich tracts occupy residues 662–674 (PKLDKKLEESDVN) and 697–707 (GEREEQKENKV). A compositionally biased stretch (polar residues) spans 874 to 888 (SSLFTGNPAQPQTDE). One can recognise an LIM zinc-binding domain in the interval 1011 to 1073 (DTCVFCQKRV…KMHFSQRKTS (63 aa)). Over residues 1086–1099 (IRSSSITISNHTST) the composition is skewed to low complexity. Residues 1112 to 1123 (DSSTQQDLQTLP) show a composition bias toward polar residues. Over residues 1133 to 1143 (EVKDSSKKADP) the composition is skewed to basic and acidic residues. The span at 1144–1154 (ADSAPACPDSP) shows a compositional bias: low complexity. A compositionally biased stretch (acidic residues) spans 1202–1211 (LAEEDGNSDF). Residues 1220–1242 (SKKPSNPSTDSNCLPTKDNSSTP) show a composition bias toward polar residues. Positions 1259-1270 (EYPKPSSSSPEP) are enriched in low complexity. A compositionally biased stretch (polar residues) spans 1302 to 1325 (DLTNPGKSGAEEQQQQHVKPSISL). A compositionally biased stretch (pro residues) spans 1333 to 1342 (THPQPEPAPP). A compositionally biased stretch (low complexity) spans 1475–1489 (KASAQQQQQQKSNSS). The 151-residue stretch at 1517–1667 (KSDELKRLHR…EKAEDRDLES (151 aa)) folds into the bMERB domain.

It belongs to the Mical family. FAD serves as cofactor.

The protein localises to the nucleus. Its subcellular location is the cytoplasm. It catalyses the reaction L-methionyl-[F-actin] + NADPH + O2 + H(+) = L-methionyl-(R)-S-oxide-[F-actin] + NADP(+) + H2O. Nuclear monooxygenase that promotes depolymerization of F-actin by mediating oxidation of specific methionine residues on actin and regulates the srf signaling. Acts by modifying nuclear actin subunits through the addition of oxygen to form methionine-sulfoxide, leading to promote actin filament severing and prevent repolymerization. Acts as a key regulator of the srf signaling pathway elicited by nerve growth factor and serum: mediates oxidation and subsequent depolymerization of nuclear actin, leading to increase mkl1/mrtf-a presence in the nucleus and promote srf:mkl1/mrtf-a-dependent gene transcription. This Danio rerio (Zebrafish) protein is [F-actin]-monooxygenase mical2b.